A 375-amino-acid chain; its full sequence is Chaperone protein DnaJ (375 aa).

Residues D6–G71 enclose the J domain. The CR-type zinc finger occupies G132–Q214. Zn(2+) contacts are provided by C145, C148, C162, C165, C188, C191, C202, and C205. 4 CXXCXGXG motif repeats span residues C145–G152, C162–G169, C188–G195, and C202–G209. A disordered region spans residues P222–G243.

Belongs to the DnaJ family. In terms of assembly, homodimer. Zn(2+) serves as cofactor.

The protein resides in the cytoplasm. Participates actively in the response to hyperosmotic and heat shock by preventing the aggregation of stress-denatured proteins and by disaggregating proteins, also in an autonomous, DnaK-independent fashion. Unfolded proteins bind initially to DnaJ; upon interaction with the DnaJ-bound protein, DnaK hydrolyzes its bound ATP, resulting in the formation of a stable complex. GrpE releases ADP from DnaK; ATP binding to DnaK triggers the release of the substrate protein, thus completing the reaction cycle. Several rounds of ATP-dependent interactions between DnaJ, DnaK and GrpE are required for fully efficient folding. Also involved, together with DnaK and GrpE, in the DNA replication of plasmids through activation of initiation proteins. This is Chaperone protein DnaJ from Halothermothrix orenii (strain H 168 / OCM 544 / DSM 9562).